The primary structure comprises 570 residues: Methionine--tRNA ligase (570 aa).

A 'HIGH' region motif is present at residues 14–24; sequence PYINGIKHLGN. 4 residues coordinate Zn(2+): Cys146, Cys149, Cys159, and Cys162. Positions 347–351 match the 'KMSKS' region motif; the sequence is QFSTS. An ATP-binding site is contributed by Thr350.

Belongs to the class-I aminoacyl-tRNA synthetase family. MetG type 1 subfamily. As to quaternary structure, monomer. It depends on Zn(2+) as a cofactor.

The protein localises to the cytoplasm. It carries out the reaction tRNA(Met) + L-methionine + ATP = L-methionyl-tRNA(Met) + AMP + diphosphate. Functionally, is required not only for elongation of protein synthesis but also for the initiation of all mRNA translation through initiator tRNA(fMet) aminoacylation. The protein is Methionine--tRNA ligase of Jannaschia sp. (strain CCS1).